Consider the following 294-residue polypeptide: 4-hydroxy-tetrahydrodipicolinate synthase (294 aa).

Residue Thr44 coordinates pyruvate. Tyr132 functions as the Proton donor/acceptor in the catalytic mechanism. Lys161 (schiff-base intermediate with substrate) is an active-site residue. A pyruvate-binding site is contributed by Ile206.

This sequence belongs to the DapA family. Homotetramer; dimer of dimers.

It localises to the cytoplasm. The enzyme catalyses L-aspartate 4-semialdehyde + pyruvate = (2S,4S)-4-hydroxy-2,3,4,5-tetrahydrodipicolinate + H2O + H(+). It functions in the pathway amino-acid biosynthesis; L-lysine biosynthesis via DAP pathway; (S)-tetrahydrodipicolinate from L-aspartate: step 3/4. In terms of biological role, catalyzes the condensation of (S)-aspartate-beta-semialdehyde [(S)-ASA] and pyruvate to 4-hydroxy-tetrahydrodipicolinate (HTPA). This is 4-hydroxy-tetrahydrodipicolinate synthase from Thermotoga sp. (strain RQ2).